Here is a 176-residue protein sequence, read N- to C-terminus: MILSNDELKKLISLGKLKVDPLYPDAVRENGLDLRIGGEYAIYAYEGAVVRPCDLDDAKPLFRVVKADEVVIPPRNFVLLTTEEYVKMPEDVAGLANLRSTLARYGLSIPPTVVDVGFEGNITIEVVNNSPNTIVLKRGMRFLHLVLIKAEGRAAYRGAYQGQRGVTPPKGLKGEC.

DCTP-binding positions include 99–104 (RSTLAR) and Asp-115. Residue Glu-125 is the Proton donor/acceptor of the active site. Gln-163 provides a ligand contact to dCTP.

This sequence belongs to the dCTP deaminase family. As to quaternary structure, homotrimer.

It carries out the reaction dCTP + H2O + H(+) = dUTP + NH4(+). It participates in pyrimidine metabolism; dUMP biosynthesis; dUMP from dCTP (dUTP route): step 1/2. In terms of biological role, catalyzes the deamination of dCTP to dUTP. The sequence is that of dCTP deaminase from Pyrobaculum calidifontis (strain DSM 21063 / JCM 11548 / VA1).